Reading from the N-terminus, the 311-residue chain is Maspardin (311 aa).

The AB hydrolase-1 domain maps to 86 to 159 (EFCDGFRKLL…NSFWLMPSFM (74 aa)).

It belongs to the AB hydrolase superfamily.

The protein localises to the cytoplasm. The polypeptide is Maspardin (spg21) (Danio rerio (Zebrafish)).